The sequence spans 475 residues: Chemotaxis protein MotD (475 aa).

3 disordered regions span residues 1-175 (MRPL…PVGG), 195-243 (LQPE…SEPD), and 408-475 (GDSA…HVYM). Residues 9–22 (RTSAASRPAQSLSV) show a composition bias toward polar residues. Positions 79 to 100 (ADVPASMADAASPDARPASERA) are enriched in low complexity. Positions 143–155 (HSRETVHALRDAI) are enriched in basic and acidic residues. The segment covering 408–417 (GDSASGGGGQ) has biased composition (gly residues). Residues 427-449 (EGRERAGDDGQGRQPRDGGRAAT) show a composition bias toward basic and acidic residues.

It is found in the cytoplasm. In terms of biological role, required for the rotation of the flagellar motor. Has a positive effect as flagellar rotation increases when an excess of motd is present. This is Chemotaxis protein MotD (motD) from Rhizobium meliloti (Ensifer meliloti).